A 278-amino-acid chain; its full sequence is Ras-related protein Rab-40B (278 aa).

Residues S23, G26, and K27 each coordinate GTP. Residues 41 to 49 (SPYGHPAGI) form a switch-I region. D69 is a binding site for Mg(2+). Positions 72, 126, and 127 each coordinate GTP. A switch-II region spans residues 72-88 (GQGRFCTIFRSYSRGAQ). In terms of domain architecture, SOCS box spans 175 to 228 (LLRHGMDRLWRPSKVLSLQELCCRAVVSCTPGHLVDKLPLPVALRSHLKSFSMA). Residues 245-278 (ANSSHKRNSFRKVRTIRPPQSPPRNCARNSCKIS) form a disordered region. Over residues 248–259 (SHKRNSFRKVRT) the composition is skewed to basic residues. Residue C270 is the site of S-palmitoyl cysteine attachment. Residue C275 is the site of S-geranylgeranyl cysteine attachment.

This sequence belongs to the small GTPase superfamily. Rab family. In terms of assembly, component of the cullin-5-RING E3 ubiquitin-protein ligase complex (ECS(RAB40B) complex) composed of CUL5, Elongin BC (ELOB and ELOC), RNF7/RBX2 and RAB40B; RAB40B interaction with ECS complex is GTP-independent. Binds (GTP-bound) LIMA1; interaction promotes LIMA1 subcellular localization in lamellipodia during cell migration. Interacts (GTP-bound) with TKS5/SH3PXD2A (via PX domain); interaction promotes invadopodia-mediated extracellular matrix degradation. Requires Mg(2+) as cofactor.

It localises to the cell membrane. The protein localises to the cytoplasm. Its subcellular location is the cytosol. The protein resides in the cell projection. It is found in the lamellipodium membrane. It localises to the ruffle. It carries out the reaction GTP + H2O = GDP + phosphate + H(+). It participates in protein modification; protein ubiquitination. Its activity is regulated as follows. Regulated by guanine nucleotide exchange factors (GEFs) which promote the exchange of bound GDP for free GTP. Regulated by GTPase activating proteins (GAPs) which increase the GTP hydrolysis activity. Inhibited by GDP dissociation inhibitors (GDIs). In terms of biological role, RAB40B small GTPase acts as substrate-recognition components of the ECS(RAB40B) E3 ubiquitin ligase complex which mediates the ubiquitination of target proteins. The Rab40 subfamily belongs to the Rab family that are key regulators of intracellular membrane trafficking, from the formation of transport vesicles to their fusion with membranes. Rabs cycle between an inactive GDP-bound form and an active GTP-bound form that is able to recruit to membranes different sets of downstream effectors directly responsible for vesicle formation, movement, tethering and fusion. As part of the ECS(RAB40B) complex, GTP-bound RAB40B promotes LIMA1/EPLIN ubiquitination and degradation, thereby regulating leading-edge actin dynamics during cell migration. As part of the ECS(RAB40B) complex, GTP-bound RAB40B also ubiquitinates RAP2A GTPase which promotes its localization to lamellipodia and activation to drive cell migration. The ECS(RAB40B) complex does not mediate canonical ubiquitin-dependent degradation of RAP2. RAB40B also binds TKS5/SH3PXD2A effector independently from ECS complex to promote invadopodia-mediated extracellular matrix degradation. In Mus musculus (Mouse), this protein is Ras-related protein Rab-40B.